Reading from the N-terminus, the 617-residue chain is Type VII secretion systems protein EssD (617 aa).

A disordered region spans residues 420 to 448 (QNHVTHGPKDSMVRSEGKHSISSHEMNSS). The span at 426 to 438 (GPKDSMVRSEGKH) shows a compositional bias: basic and acidic residues.

It belongs to the EssD family. As to quaternary structure, interacts (via C-terminal) with EssG; this interaction blocks EssD activity. Interacts with EssE.

The protein resides in the secreted. Its subcellular location is the cell membrane. Functionally, component of the type VII secretion system (Ess). Plays a role in Ess secretion during infection. Required for the efficient secretion of EsxA. Required for abscess formation and staphylococcal persistence in host tissue. Possesses a toxic DNase activity that is modulated by EssG by forming a nuclease toxin-antitoxin pair. This nuclease toxin targets competitor bacteria. This Staphylococcus aureus (strain Newman) protein is Type VII secretion systems protein EssD.